The following is a 162-amino-acid chain: Small ribosomal subunit protein uS9 (162 aa).

It belongs to the universal ribosomal protein uS9 family.

The polypeptide is Small ribosomal subunit protein uS9 (Methylobacterium nodulans (strain LMG 21967 / CNCM I-2342 / ORS 2060)).